An 863-amino-acid polypeptide reads, in one-letter code: Disintegrin and metalloproteinase domain-containing protein 15 (863 aa).

Residues 1–17 (MRLALLWALGLLGAGSP) form the signal peptide. Positions 18–206 (LPSWPLPNIG…LGQRHIRRRR (189 aa)) are excised as a propeptide. A disordered region spans residues 22-45 (PLPNIGGTEEQQAESEKAPREPLE). The span at 35 to 44 (ESEKAPREPL) shows a compositional bias: basic and acidic residues. A Cysteine switch motif is present at residues 177–184 (HTCALSWR). Residue cysteine 179 participates in Zn(2+) binding. Topologically, residues 207-696 (DVVTETKTVE…QLKATSSLTT (490 aa)) are extracellular. Residues 213–414 (KTVELVIVAD…GMGSCLFERL (202 aa)) enclose the Peptidase M12B domain. N-linked (GlcNAc...) asparagine glycosylation is present at asparagine 237. Cystine bridges form between cysteine 323/cysteine 409, cysteine 365/cysteine 393, cysteine 367/cysteine 376, and cysteine 480/cysteine 500. Position 348 (histidine 348) interacts with Zn(2+). Residue glutamate 349 is part of the active site. Histidine 352 and histidine 358 together coordinate Zn(2+). N-linked (GlcNAc...) asparagine glycosylation is found at asparagine 389 and asparagine 392. A Disintegrin domain is found at 421 to 508 (AAFCGNMFVE…QCPPDVSLGD (88 aa)). Residues 484–486 (RGD) carry the Cell attachment site motif. N-linked (GlcNAc...) asparagine glycosylation is found at asparagine 606 and asparagine 611. Disulfide bonds link cysteine 657/cysteine 667, cysteine 661/cysteine 673, and cysteine 675/cysteine 684. Positions 657-685 (CRSKCHGHGVCDSNRHCYCEEGWAPPDCT) constitute an EGF-like domain. A helical membrane pass occupies residues 697–717 (GLLLSLLVLLVLVMLGASYWY). Tyrosine 715 and tyrosine 735 each carry phosphotyrosine; by HCK and LCK. At 718–863 (RARLHQRLCQ…PPPTVSSLYL (146 aa)) the chain is on the cytoplasmic side. The tract at residues 736–863 (RAAQSGPSER…PPPTVSSLYL (128 aa)) is disordered. Pro residues predominate over residues 767 to 778 (PAPPSRPLPPDP). The span at 779–789 (VSKRLQAELAD) shows a compositional bias: basic and acidic residues. Composition is skewed to pro residues over residues 791 to 800 (PNPPTRPLPA) and 813 to 824 (AKPPPPRKPLPA). 2 consecutive short sequence motifs (SH3-binding) follow at residues 815–821 (PPPPRKP) and 850–856 (RPAPPPP).

In terms of assembly, interacts with ITAGV-ITGB3 (vitronectin receptor). Interacts with SH3GL2 and SNX9; this interaction occurs preferentially with ADAM15 precursor, rather than the processed form, suggesting it occurs in a secretory pathway compartment prior to the medial Golgi. Interacts with ITAG9-ITGB1. Interacts specifically with Src family protein-tyrosine kinases (PTKs). Interacts with SH3PXD2A. Interacts with ITAGV-ITGB1. Interacts with GRB2, HCK, ITSN1, ITSN2, LYN, MAPK1, MAPK3, NCF1, NCK1, nephrocystin, PTK6, SNX33, LCK and SRC. Zn(2+) serves as cofactor. Post-translationally, the precursor is cleaved by a furin endopeptidase. Phosphorylation increases association with PTKs. In terms of tissue distribution, expressed in colon and small intestine. Expressed in airway smooth muscle and glomerular mesangial cells (at protein level). Ubiquitously expressed. Overexpressed in atherosclerotic lesions. Constitutively expressed in cultured endothelium and smooth muscle. Expressed in chondrocytes. Expressed in airway smooth muscle and glomerular mesangial cells.

The protein resides in the endomembrane system. It localises to the cell junction. It is found in the adherens junction. The protein localises to the cell projection. Its subcellular location is the cilium. The protein resides in the flagellum. It localises to the cytoplasmic vesicle. It is found in the secretory vesicle. The protein localises to the acrosome. Its activity is regulated as follows. Inhibited by hydroxamate-type metalloproteinase inhibitors such as marimastat. Inhibited by metalloproteinase inhibitor 2 (TIMP-2) and TIMP-3 at nanomolar concentrations. Not significantly inhibited by TIMP-1 at concentrations of up to 100 nM. Not activated by PMA or ionomycin. Active metalloproteinase with gelatinolytic and collagenolytic activity. Plays a role in the wound healing process. Mediates both heterotypic intraepithelial cell/T-cell interactions and homotypic T-cell aggregation. Inhibits beta-1 integrin-mediated cell adhesion and migration of airway smooth muscle cells. Suppresses cell motility on or towards fibronectin possibly by driving alpha-v/beta-1 integrin (ITAGV-ITGB1) cell surface expression via ERK1/2 inactivation. Cleaves E-cadherin in response to growth factor deprivation. Plays a role in glomerular cell migration. Plays a role in pathological neovascularization. May play a role in cartilage remodeling. May be proteolytically processed, during sperm epididymal maturation and the acrosome reaction. May play a role in sperm-egg binding through its disintegrin domain. This Homo sapiens (Human) protein is Disintegrin and metalloproteinase domain-containing protein 15 (ADAM15).